The primary structure comprises 192 residues: Charged multivesicular body protein 1 (192 aa).

Coiled coils occupy residues 7–35 (QLKF…KLKK) and 102–125 (NMDL…LDVQ). A disordered region spans residues 164-192 (QMGSAPSEKVQQGETDELTERLNRLKQKN).

It belongs to the SNF7 family. In terms of assembly, probable peripherally associated component of the endosomal sorting required for transport complex III (ESCRT-III).

The protein resides in the endosome membrane. Its function is as follows. Probable peripherally associated component of the endosomal sorting required for transport complex III (ESCRT-III) which is involved in multivesicular bodies (MVBs) formation and sorting of endosomal cargo proteins into MVBs. MVBs contain intraluminal vesicles (ILVs) that are generated by invagination and scission from the limiting membrane of the endosome and are delivered to lysosomes enabling degradation of membrane proteins. The chain is Charged multivesicular body protein 1 (chmp1) from Dictyostelium discoideum (Social amoeba).